A 768-amino-acid polypeptide reads, in one-letter code: Translation initiation factor IF-2, chloroplastic (768 aa).

Disordered stretches follow at residues 1–20, 54–77, and 155–176; these read MFLN…SNIN, KSES…DKKS, and KKVA…PPES. The segment covering 54–65 has biased composition (basic and acidic residues); sequence KSESHTGGEQHL. Residues 160–176 show a composition bias toward polar residues; the sequence is TPSQNSASIQSNSPPES. The tr-type G domain occupies 261 to 434; that stretch reads KRPPIVTVMG…TLLAELEDLK (174 aa). Residues 270–277, 320–324, and 374–377 contribute to the GTP site; these read GHVDHGKT, DTPGH, and SKID.

This sequence belongs to the TRAFAC class translation factor GTPase superfamily. Classic translation factor GTPase family. IF-2 subfamily.

Its subcellular location is the plastid. It localises to the chloroplast. Its function is as follows. One of the essential components for the initiation of protein synthesis. Protects formylmethionyl-tRNA from spontaneous hydrolysis and promotes its binding to the 30S ribosomal subunits. Also involved in the hydrolysis of GTP during the formation of the 70S ribosomal complex. In Pyropia yezoensis (Susabi-nori), this protein is Translation initiation factor IF-2, chloroplastic (infB).